The sequence spans 433 residues: uncharacterized protein (433 aa).

Positions 1 to 126 are methylglyoxal synthase; sequence MAAHIALIAH…VIKLLGKTKT (126 aa). One can recognise an MGS-like domain in the interval 1 to 145; it reads MAAHIALIAH…GQGNVERELD (145 aa). Aspartate 62 is an active-site residue. Residues 127-262 enclose the DAGKc domain; it reads GHLIFNPVAG…VDTALCNDIP (136 aa).

In the N-terminal section; belongs to the methylglyoxal synthase family.

This is an uncharacterized protein from Synechocystis sp. (strain ATCC 27184 / PCC 6803 / Kazusa).